The sequence spans 177 residues: Inner membrane-spanning protein YciB (177 aa).

The next 5 membrane-spanning stretches (helical) occupy residues 23–43 (MFVATGVAIAATAVMVAWAWF), 50–70 (TMQWISLGLIVVLGGATLLLH), 73–93 (HFIMWKPTVLYWVMGAGLLIS), 119–139 (LTWAWSGFFAFMGALNLFVAY), and 149–169 (FKLFGGMGLMLLFVIAQSLFL).

This sequence belongs to the YciB family.

It is found in the cell inner membrane. Functionally, plays a role in cell envelope biogenesis, maintenance of cell envelope integrity and membrane homeostasis. In Chromobacterium violaceum (strain ATCC 12472 / DSM 30191 / JCM 1249 / CCUG 213 / NBRC 12614 / NCIMB 9131 / NCTC 9757 / MK), this protein is Inner membrane-spanning protein YciB.